Reading from the N-terminus, the 305-residue chain is MPSLPVLIDTTPDFDFAPAQDATQKRTLLLAPPSIAAHEEKLRDIFATFDRSVTDLQMLDRLSAGFVTLPASAYDLVLVLTDTNGARRNEALGLLTRDVFNVLTPAMKPSAQLKLQDGPFQATEGREAILAGLVENNGAFEKPQYQEAAVPLRFGLKKKNKVAPEPVKVESVGFVDNYDDDELIDEDDLLAEEDLGRPVQQPAECKPDIAKKRRRACKDCTCGLAAQLEAEDAERREKANAELNVLKLKTDELNDEVDFTVQGKTGSCNSCSLGDAFRCEGCPFIGLPAFKPGEEVRIMNDMAQL.

Residues 21–150 (DATQKRTLLL…EKPQYQEAAV (130 aa)) form an N-terminal SAM-like domain region. A linker region spans residues 151–195 (PLRFGLKKKNKVAPEPVKVESVGFVDNYDDDELIDEDDLLAEEDL). Residues Cys205, Cys217, Cys220, and Cys222 each contribute to the [2Fe-2S] cluster site. The fe-S binding site A stretch occupies residues 205–222 (CKPDIAKKRRRACKDCTC). Residues Cys268, Cys271, Cys279, and Cys282 each coordinate [4Fe-4S] cluster. Short sequence motifs (cx2C motif) lie at residues 268–271 (CNSC) and 279–282 (CEGC). The tract at residues 268–282 (CNSCSLGDAFRCEGC) is fe-S binding site B.

It belongs to the anamorsin family. As to quaternary structure, monomer. Interacts with tah18. Interacts with mia40. [2Fe-2S] cluster is required as a cofactor. It depends on [4Fe-4S] cluster as a cofactor.

The protein localises to the cytoplasm. It localises to the mitochondrion intermembrane space. In terms of biological role, component of the cytosolic iron-sulfur (Fe-S) protein assembly (CIA) machinery required for the maturation of extramitochondrial Fe-S proteins. Part of an electron transfer chain functioning in an early step of cytosolic Fe-S biogenesis, facilitating the de novo assembly of a [4Fe-4S] cluster on the scaffold complex cfd1-nbp35. Electrons are transferred to dre2 from NADPH via the FAD- and FMN-containing protein tah18. Tah18-dre2 are also required for the assembly of the diferric tyrosyl radical cofactor of ribonucleotide reductase (RNR), probably by providing electrons for reduction during radical cofactor maturation in the catalytic small subunit rnr2. In Talaromyces marneffei (strain ATCC 18224 / CBS 334.59 / QM 7333) (Penicillium marneffei), this protein is Fe-S cluster assembly protein dre2.